The primary structure comprises 71 residues: Protein DP71L (71 aa).

2 important for host CHOP inhibition regions span residues 16–18 (VRF) and 57–61 (LSTVL).

This sequence belongs to the asfivirus DP71L family. As to quaternary structure, interacts (via C-terminus) with host PPP1CB.

Its function is as follows. Interacts with the host phosphatase PP1 catalytic subunit (PPP1CB) and recruits it to dephosphorylate EIF2S1/eIF2alpha and therefore restores the host translation that has been shut-down by the host. Also inhibits the EIF2S1/eIF2alpha-ATF4-DDIT3/CHOP pathway. This chain is Protein DP71L, found in African swine fever virus (strain Badajoz 1971 Vero-adapted) (Ba71V).